Consider the following 197-residue polypeptide: Peptidyl-tRNA hydrolase (197 aa).

TRNA is bound at residue Y21. H26 acts as the Proton acceptor in catalysis. TRNA is bound by residues Y72, N74, and N120.

It belongs to the PTH family. As to quaternary structure, monomer.

Its subcellular location is the cytoplasm. The catalysed reaction is an N-acyl-L-alpha-aminoacyl-tRNA + H2O = an N-acyl-L-amino acid + a tRNA + H(+). Hydrolyzes ribosome-free peptidyl-tRNAs (with 1 or more amino acids incorporated), which drop off the ribosome during protein synthesis, or as a result of ribosome stalling. Its function is as follows. Catalyzes the release of premature peptidyl moieties from peptidyl-tRNA molecules trapped in stalled 50S ribosomal subunits, and thus maintains levels of free tRNAs and 50S ribosomes. The chain is Peptidyl-tRNA hydrolase from Saccharophagus degradans (strain 2-40 / ATCC 43961 / DSM 17024).